We begin with the raw amino-acid sequence, 452 residues long: Phenylalanine-4-hydroxylase (452 aa).

Ser-16 bears the Phosphoserine; by PKA mark. The ACT domain maps to 36-114 (SLIFSLKEEV…TVHELSRDKK (79 aa)). Positions 285, 290, and 330 each coordinate Fe cation.

It belongs to the biopterin-dependent aromatic amino acid hydroxylase family. In terms of assembly, homodimer and homotetramer. The cofactor is Fe(2+). In terms of processing, phosphorylation at Ser-16 increases basal activity and facilitates activation by the substrate phenylalanine.

It catalyses the reaction (6R)-L-erythro-5,6,7,8-tetrahydrobiopterin + L-phenylalanine + O2 = (4aS,6R)-4a-hydroxy-L-erythro-5,6,7,8-tetrahydrobiopterin + L-tyrosine. The protein operates within amino-acid degradation; L-phenylalanine degradation; acetoacetate and fumarate from L-phenylalanine: step 1/6. N-terminal region of PAH is thought to contain allosteric binding sites for phenylalanine and to constitute an 'inhibitory' domain that regulates the activity of a catalytic domain in the C-terminal portion of the molecule. Functionally, catalyzes the hydroxylation of L-phenylalanine to L-tyrosine. The chain is Phenylalanine-4-hydroxylase (PAH) from Homo sapiens (Human).